A 688-amino-acid chain; its full sequence is Translation initiation factor IF-2 (688 aa).

Residues 54-95 (KEKSEKTKEEDDEIETTAKNPIKESTNNKKPNKRDDKNEKVN) form a disordered region. The segment covering 86–95 (KRDDKNEKVN) has biased composition (basic and acidic residues). In terms of domain architecture, tr-type G spans 187 to 354 (KRSPIITVMG…MILLSSEILE (168 aa)). A G1 region spans residues 196–203 (GHVDHGKT). 196–203 (GHVDHGKT) serves as a coordination point for GTP. The segment at 221–225 (GITQH) is G2. A G3 region spans residues 242–245 (DTPG). GTP contacts are provided by residues 242–246 (DTPGH) and 296–299 (NKID). A G4 region spans residues 296-299 (NKID). Residues 332 to 334 (SAH) are G5.

Belongs to the TRAFAC class translation factor GTPase superfamily. Classic translation factor GTPase family. IF-2 subfamily.

The protein localises to the cytoplasm. Functionally, one of the essential components for the initiation of protein synthesis. Protects formylmethionyl-tRNA from spontaneous hydrolysis and promotes its binding to the 30S ribosomal subunits. Also involved in the hydrolysis of GTP during the formation of the 70S ribosomal complex. In Clostridium botulinum (strain Okra / Type B1), this protein is Translation initiation factor IF-2.